A 243-amino-acid polypeptide reads, in one-letter code: Type II restriction enzyme NlaIV (243 aa).

The catalysed reaction is Endonucleolytic cleavage of DNA to give specific double-stranded fragments with terminal 5'-phosphates.. Its function is as follows. A P subtype restriction enzyme that recognizes the double-stranded sequence 5'-GGNNCC-3' and cleaves after N-3. The chain is Type II restriction enzyme NlaIV (nlaIVR) from Neisseria lactamica.